Consider the following 482-residue polypeptide: Ribosomal RNA small subunit methyltransferase F (482 aa).

S-adenosyl-L-methionine contacts are provided by residues 119–125 (ASAPGSK), glutamate 143, aspartate 170, and aspartate 188. Catalysis depends on cysteine 241, which acts as the Nucleophile.

The protein belongs to the class I-like SAM-binding methyltransferase superfamily. RsmB/NOP family.

It is found in the cytoplasm. It carries out the reaction cytidine(1407) in 16S rRNA + S-adenosyl-L-methionine = 5-methylcytidine(1407) in 16S rRNA + S-adenosyl-L-homocysteine + H(+). Functionally, specifically methylates the cytosine at position 1407 (m5C1407) of 16S rRNA. This is Ribosomal RNA small subunit methyltransferase F from Shewanella sp. (strain MR-7).